The following is a 142-amino-acid chain: Phosphoribosyl-AMP cyclohydrolase (142 aa).

Asp-92 contributes to the Mg(2+) binding site. Cys-93 contributes to the Zn(2+) binding site. 2 residues coordinate Mg(2+): Asp-94 and Asp-96. Zn(2+) contacts are provided by Cys-109 and Cys-116.

The protein belongs to the PRA-CH family. In terms of assembly, homodimer. The cofactor is Mg(2+). Zn(2+) is required as a cofactor.

It is found in the cytoplasm. The catalysed reaction is 1-(5-phospho-beta-D-ribosyl)-5'-AMP + H2O = 1-(5-phospho-beta-D-ribosyl)-5-[(5-phospho-beta-D-ribosylamino)methylideneamino]imidazole-4-carboxamide. It functions in the pathway amino-acid biosynthesis; L-histidine biosynthesis; L-histidine from 5-phospho-alpha-D-ribose 1-diphosphate: step 3/9. Catalyzes the hydrolysis of the adenine ring of phosphoribosyl-AMP. In Alcanivorax borkumensis (strain ATCC 700651 / DSM 11573 / NCIMB 13689 / SK2), this protein is Phosphoribosyl-AMP cyclohydrolase.